Here is a 342-residue protein sequence, read N- to C-terminus: MKVDLFDFELPERLIAQVPLKERDASRLMVLDKQTGGLTDSSFKEIVSFFNEGDCLVLNNTRVLPARLFGTKEDTGAKVELLLLKQEENDTWETLVKPAKRVKKGTVLTFGDGRLTAVCTEELDHGGRKIEFRYDGIFYEVLESLGEMPLPPYIKEQLDDKERYQTVFSKEIGSAAAPTAGLHFTEEILDELKQKGVRIEFITLHVGLGTFRPVSADDVEEHNMHAEFYEMTEETAASLNEVRKAGGRIVSVGTTSTRTLETIAGEHDGEFTASSGWTSIFIYPGYEFKAIDGMITNFHLPKSSLIMLVSALAGREHVLSAYRHAVEEEYRFFSFGDAMLII.

Belongs to the QueA family. In terms of assembly, monomer.

It is found in the cytoplasm. It catalyses the reaction 7-aminomethyl-7-carbaguanosine(34) in tRNA + S-adenosyl-L-methionine = epoxyqueuosine(34) in tRNA + adenine + L-methionine + 2 H(+). It functions in the pathway tRNA modification; tRNA-queuosine biosynthesis. Functionally, transfers and isomerizes the ribose moiety from AdoMet to the 7-aminomethyl group of 7-deazaguanine (preQ1-tRNA) to give epoxyqueuosine (oQ-tRNA). This is S-adenosylmethionine:tRNA ribosyltransferase-isomerase from Bacillus velezensis (strain DSM 23117 / BGSC 10A6 / LMG 26770 / FZB42) (Bacillus amyloliquefaciens subsp. plantarum).